The following is a 144-amino-acid chain: Large ribosomal subunit protein uL11 (144 aa).

The protein belongs to the universal ribosomal protein uL11 family. As to quaternary structure, part of the ribosomal stalk of the 50S ribosomal subunit. Interacts with L10 and the large rRNA to form the base of the stalk. L10 forms an elongated spine to which L12 dimers bind in a sequential fashion forming a multimeric L10(L12)X complex. In terms of processing, one or more lysine residues are methylated.

Functionally, forms part of the ribosomal stalk which helps the ribosome interact with GTP-bound translation factors. This chain is Large ribosomal subunit protein uL11, found in Saccharopolyspora erythraea (strain ATCC 11635 / DSM 40517 / JCM 4748 / NBRC 13426 / NCIMB 8594 / NRRL 2338).